The chain runs to 202 residues: Small heat shock protein hspG5 (202 aa).

Positions Lys31–Asn202 constitute a sHSP domain. Positions Thr96–Asn138 are disordered.

It belongs to the small heat shock protein (HSP20) family.

This Dictyostelium discoideum (Social amoeba) protein is Small heat shock protein hspG5 (hspG5).